We begin with the raw amino-acid sequence, 133 residues long: Putative pre-16S rRNA nuclease (133 aa).

It belongs to the YqgF nuclease family.

The protein localises to the cytoplasm. Could be a nuclease involved in processing of the 5'-end of pre-16S rRNA. The polypeptide is Putative pre-16S rRNA nuclease (Dehalococcoides mccartyi (strain ATCC BAA-2266 / KCTC 15142 / 195) (Dehalococcoides ethenogenes (strain 195))).